The following is a 194-amino-acid chain: Large ribosomal subunit protein uL5 (194 aa).

The protein belongs to the universal ribosomal protein uL5 family. In terms of assembly, part of the 50S ribosomal subunit; part of the 5S rRNA/L5/L18/L25 subcomplex. Contacts the 5S rRNA and the P site tRNA. Forms a bridge to the 30S subunit in the 70S ribosome.

In terms of biological role, this is one of the proteins that bind and probably mediate the attachment of the 5S RNA into the large ribosomal subunit, where it forms part of the central protuberance. In the 70S ribosome it contacts protein S13 of the 30S subunit (bridge B1b), connecting the 2 subunits; this bridge is implicated in subunit movement. Contacts the P site tRNA; the 5S rRNA and some of its associated proteins might help stabilize positioning of ribosome-bound tRNAs. The protein is Large ribosomal subunit protein uL5 of Chlorobium luteolum (strain DSM 273 / BCRC 81028 / 2530) (Pelodictyon luteolum).